A 393-amino-acid polypeptide reads, in one-letter code: Golgi membrane protein 1 (393 aa).

Met1 carries the post-translational modification N-acetylmethionine. At 1-12 the chain is on the cytoplasmic side; that stretch reads MMGLGNGRRSMK. Residues 13-35 form a helical; Signal-anchor for type II membrane protein membrane-spanning segment; that stretch reads SPPLILAALVACVIVLGFNYWIA. Topologically, residues 36-393 are lumenal; the sequence is SSRSVELQTR…QVGIHIPQQA (358 aa). Residues 40-183 are a coiled coil; sequence VELQTRIVEL…IEEVIRKRNE (144 aa). Asn109 and Asn144 each carry an N-linked (GlcNAc...) asparagine glycan. 2 disordered regions span residues 180–247 and 284–352; these read KRNE…QVQN and HTQL…LAGN. Ser187 is subject to Phosphoserine. 2 stretches are compositionally biased toward polar residues: residues 192-201 and 227-247; these read ETNNQHQQAL and NKSQ…QVQN. N-linked (GlcNAc...) asparagine glycosylation is present at Asn227. A compositionally biased stretch (basic and acidic residues) spans 294-320; it reads RPEEDSQYPEREQLVIRDRQEQQRASE. A compositionally biased stretch (acidic residues) spans 330–339; the sequence is DEYDMDENEA.

Belongs to the GOLM family. As to quaternary structure, interacts with DYM. Post-translationally, glycosylated. In terms of processing, phosphorylation sites are present in the extracellular medium.

It is found in the golgi apparatus. The protein localises to the cis-Golgi network membrane. Unknown. Cellular response protein to viral infection. The polypeptide is Golgi membrane protein 1 (Golm1) (Mus musculus (Mouse)).